The chain runs to 997 residues: Translation initiation factor IF-2 (997 aa).

Residues 101-409 are disordered; sequence ELAAEQAAAR…QHQDRRHEQV (309 aa). 3 stretches are compositionally biased toward low complexity: residues 116–185, 195–208, and 244–280; these read AEAV…QAEP, AAPA…VEPA, and PSAP…PAAP. The span at 281 to 292 shows a compositional bias: basic and acidic residues; it reads DRAREEARRAAE. A compositionally biased stretch (gly residues) spans 385-394; it reads RAGGKGGRGG. A compositionally biased stretch (basic and acidic residues) spans 400–409; sequence QHQDRRHEQV. The tr-type G domain occupies 498–665; that stretch reads PRAPVVTVMG…NVLLQAEILE (168 aa). The G1 stretch occupies residues 507–514; that stretch reads GHVDHGKT. Residue 507–514 coordinates GTP; that stretch reads GHVDHGKT. Positions 532–536 are G2; that stretch reads GITQH. A G3 region spans residues 553 to 556; that stretch reads DTPG. GTP is bound by residues 553–557 and 607–610; these read DTPGH and NKID. The interval 607-610 is G4; it reads NKID. Residues 643-645 are G5; sequence SAK.

The protein belongs to the TRAFAC class translation factor GTPase superfamily. Classic translation factor GTPase family. IF-2 subfamily.

It localises to the cytoplasm. Functionally, one of the essential components for the initiation of protein synthesis. Protects formylmethionyl-tRNA from spontaneous hydrolysis and promotes its binding to the 30S ribosomal subunits. Also involved in the hydrolysis of GTP during the formation of the 70S ribosomal complex. The chain is Translation initiation factor IF-2 from Bordetella bronchiseptica (strain ATCC BAA-588 / NCTC 13252 / RB50) (Alcaligenes bronchisepticus).